The sequence spans 466 residues: Putative chitinase 2 (466 aa).

A signal peptide spans 1–17 (MYLTIWLVPLLAVGTWG). Residues 20–380 (FNRFCHYNSW…MAVIHGLNAY (361 aa)) enclose the GH18 domain. C24 and C49 are oxidised to a cystine. The Proton donor role is filled by E141. The stretch at 395–447 (YNKKILRARVSLRNYRRRNQQGKVAEMEQRIRNLEQELQQSMGNMAYERQQAQ) forms a coiled coil.

The protein belongs to the glycosyl hydrolase 18 family. In terms of tissue distribution, prismatic layer of shell (at protein level). Expressed primarily in the mantle with highest level in the mantle edge and lower level in the mantle pallium.

The protein resides in the secreted. It catalyses the reaction Random endo-hydrolysis of N-acetyl-beta-D-glucosaminide (1-&gt;4)-beta-linkages in chitin and chitodextrins.. The polypeptide is Putative chitinase 2 (Margaritifera margaritifera (Freshwater pearl mussel)).